The primary structure comprises 160 residues: F-box protein At1g15015 (160 aa).

Residues 1–44 (MDVTLPHHVVEDILERLPVKTLRKFKCVCSTWRSTIDSQRFKDR) enclose the F-box domain.

In Arabidopsis thaliana (Mouse-ear cress), this protein is F-box protein At1g15015.